The sequence spans 148 residues: 3-dehydroquinate dehydratase (148 aa).

The active-site Proton acceptor is the Tyr23. Asn74, His80, and Asp87 together coordinate substrate. The active-site Proton donor is the His100. Substrate contacts are provided by residues 101 to 102 (IS) and Arg111.

The protein belongs to the type-II 3-dehydroquinase family. Homododecamer.

The enzyme catalyses 3-dehydroquinate = 3-dehydroshikimate + H2O. Its pathway is metabolic intermediate biosynthesis; chorismate biosynthesis; chorismate from D-erythrose 4-phosphate and phosphoenolpyruvate: step 3/7. In terms of biological role, catalyzes a trans-dehydration via an enolate intermediate. The sequence is that of 3-dehydroquinate dehydratase from Thermoanaerobacter pseudethanolicus (strain ATCC 33223 / 39E) (Clostridium thermohydrosulfuricum).